Reading from the N-terminus, the 923-residue chain is Lysosomal acid alpha-glucosidase (923 aa).

Residues 1–17 (MKHQVLLPLLVTTAIIA) form the signal peptide. A propeptide spanning residues 18 to 36 (GSVGVYTHSKPLLGQSQDQ) is cleaved from the precursor. 3 N-linked (GlcNAc...) asparagine glycosylation sites follow: asparagine 65, asparagine 405, and asparagine 440. Residue aspartate 455 is the Nucleophile of the active site. Residue glutamate 458 is part of the active site. The active-site Proton donor is aspartate 585. N-linked (GlcNAc...) asparagine glycosylation is found at asparagine 586, asparagine 621, asparagine 646, asparagine 848, asparagine 908, and asparagine 912.

The protein belongs to the glycosyl hydrolase 31 family.

Its subcellular location is the lysosome. It is found in the secreted. It carries out the reaction Hydrolysis of terminal, non-reducing (1-&gt;4)-linked alpha-D-glucose residues with release of alpha-D-glucose.. Functionally, essential for the degradation of glycogen to glucose in lysosomes. Has both alpha-1,4 and alpha-1,6-glucosidase activity. The sequence is that of Lysosomal acid alpha-glucosidase from Tetrahymena pyriformis.